A 380-amino-acid polypeptide reads, in one-letter code: DNA replication and repair protein RecF (380 aa).

Position 30 to 37 (30 to 37 (GPNGFGKT)) interacts with ATP.

It belongs to the RecF family.

It localises to the cytoplasm. Functionally, the RecF protein is involved in DNA metabolism; it is required for DNA replication and normal SOS inducibility. RecF binds preferentially to single-stranded, linear DNA. It also seems to bind ATP. The polypeptide is DNA replication and repair protein RecF (Mycobacterium sp. (strain KMS)).